Here is a 183-residue protein sequence, read N- to C-terminus: Adenine phosphoribosyltransferase (183 aa).

Belongs to the purine/pyrimidine phosphoribosyltransferase family. Homodimer.

The protein localises to the cytoplasm. It catalyses the reaction AMP + diphosphate = 5-phospho-alpha-D-ribose 1-diphosphate + adenine. It participates in purine metabolism; AMP biosynthesis via salvage pathway; AMP from adenine: step 1/1. Functionally, catalyzes a salvage reaction resulting in the formation of AMP, that is energically less costly than de novo synthesis. The sequence is that of Adenine phosphoribosyltransferase from Citrobacter koseri (strain ATCC BAA-895 / CDC 4225-83 / SGSC4696).